The primary structure comprises 167 residues: Bacterial non-heme ferritin (167 aa).

Residues 1-145 (MLSKEVVKLL…GIVDKIKLIG (145 aa)) enclose the Ferritin-like diiron domain. Positions 17, 50, 53, 94, and 127 each coordinate Fe cation.

It belongs to the ferritin family. Prokaryotic subfamily. Homooligomer of 24 subunits that assemble into a spherical protein shell (12 +/- 1 nM diameter) that can sequester at least 2000 iron atoms.

Its subcellular location is the cytoplasm. The catalysed reaction is 4 Fe(2+) + O2 + 6 H2O = 4 iron(III) oxide-hydroxide + 12 H(+). In terms of biological role, iron-storage protein. This chain is Bacterial non-heme ferritin (ftn), found in Campylobacter jejuni subsp. jejuni serotype O:2 (strain ATCC 700819 / NCTC 11168).